Consider the following 96-residue polypeptide: Large ribosomal subunit protein uL23 (96 aa).

This sequence belongs to the universal ribosomal protein uL23 family. Part of the 50S ribosomal subunit. Contacts protein L29, and trigger factor when it is bound to the ribosome.

Its function is as follows. One of the early assembly proteins it binds 23S rRNA. One of the proteins that surrounds the polypeptide exit tunnel on the outside of the ribosome. Forms the main docking site for trigger factor binding to the ribosome. This is Large ribosomal subunit protein uL23 from Nitratidesulfovibrio vulgaris (strain DSM 19637 / Miyazaki F) (Desulfovibrio vulgaris).